A 328-amino-acid polypeptide reads, in one-letter code: MPSPRLRFGVLGAADIALRRTVPALLAHPDVTVVAVSSRDTARAARFAAAFGCEAVPGHQALLDRDDIDALYVPLPVMVHTPWVEAALLRGRHVLVEKPLTATRSGAEDLIALARSRGLVLMENFTSLHHAQHGTVTDLLRDGTIGELRSLSAAFTIPPKPEGDIRYQPDVGGGALLDIGIYPLRAALHFLGPDLHAAGAVLRRERRRNVVVSGHVLLTTPHGVVAELAFGMEHAYRSEYTLFGTAGRLRLDRAFTPPETHRPRVEIHRQDALDIVDLPPDAQFANLVRDFVLAVREGPGRLTQHHADAVRQADLVERVMAVARVRWC.

Arginine 20 is a substrate binding site. NADP(+) is bound by residues 38–39 (SR), leucine 75, and histidine 80. Lysine 98 functions as the Proton donor in the catalytic mechanism. Arginine 166 and aspartate 178 together coordinate NADP(+). Residues tyrosine 236 and threonine 256 each coordinate substrate.

It belongs to the Gfo/Idh/MocA family.

The enzyme catalyses dTDP-4-dehydro-2,6-dideoxy-alpha-D-glucose + NADP(+) = dTDP-3,4-didehydro-2,6-dideoxy-alpha-D-glucose + NADPH + H(+). Its pathway is antibiotic biosynthesis. Its function is as follows. Involved in the biosynthesis of one of the two 2,6-deoxysugars, dTDP-L-oleandrose, attached to the macrolactone ring oleandolide to produce the aglycone antibiotic oleandomycin. Catalyzes the reduction of the C-3 keto moiety of dTDP-3,4-diketo-2,6-dideoxy-alpha-D-glucose to yield dTDP-4-keto-2,6-dideoxy-alpha-D-glucose. NADPH is the better reductant, however NADH can also be used. This chain is dTDP-3,4-didehydro-2,6-dideoxy-alpha-D-glucose 3-reductase, found in Streptomyces antibioticus.